The sequence spans 220 residues: Phosphopantothenoylcysteine decarboxylase (220 aa).

FMN-binding positions include 29-31 (GSV) and 54-56 (TKA). H91 acts as the Proton donor in catalysis. FMN-binding positions include 107 to 110 (SANT) and A141. Positions 143, 173, and 175 each coordinate N-[(R)-4-phosphopantothenoyl]-L-cysteine. Catalysis depends on C176, which acts as the Proton donor. An N-[(R)-4-phosphopantothenoyl]-L-cysteine-binding site is contributed by M184.

It belongs to the HFCD (homooligomeric flavin containing Cys decarboxylase) superfamily. Forms homotrimers. Interacts with HIP1. Interacts with HD1 in the dark. It depends on FMN as a cofactor. In terms of tissue distribution, expressed in root meristem, shoot apical meristem (SAM), intercalary meristem, floral meristem, embryo and tip of the coleoptile before true leaf emergence.

The protein resides in the nucleus. The enzyme catalyses N-[(R)-4-phosphopantothenoyl]-L-cysteine + H(+) = (R)-4'-phosphopantetheine + CO2. It participates in cofactor biosynthesis; coenzyme A biosynthesis; CoA from (R)-pantothenate: step 3/5. In terms of biological role, catalyzes the decarboxylation of 4'-phosphopantothenoylcysteine to 4'-phosphopantetheine, a key step in coenzyme A biosynthesis. Involved in salt and osmotic tolerance, and light-regulated plant growth. Trimerization of HAL3 recruits and activates the E3 ubiquitin-protein ligase HIP1, which leads to the degradation of cell cycle suppressors, resulting in enhancement of cell division and plant growth. HAL3 function in cell division seems to be independent from its PPC decarboxylase activity. Acts as a positive regulator of flowering by binding to HD1 in the dark. In Oryza sativa subsp. japonica (Rice), this protein is Phosphopantothenoylcysteine decarboxylase.